The sequence spans 366 residues: S-adenosylmethionine:tRNA ribosyltransferase-isomerase (366 aa).

It belongs to the QueA family. In terms of assembly, monomer.

The protein localises to the cytoplasm. It carries out the reaction 7-aminomethyl-7-carbaguanosine(34) in tRNA + S-adenosyl-L-methionine = epoxyqueuosine(34) in tRNA + adenine + L-methionine + 2 H(+). It functions in the pathway tRNA modification; tRNA-queuosine biosynthesis. Transfers and isomerizes the ribose moiety from AdoMet to the 7-aminomethyl group of 7-deazaguanine (preQ1-tRNA) to give epoxyqueuosine (oQ-tRNA). This chain is S-adenosylmethionine:tRNA ribosyltransferase-isomerase, found in Agrobacterium fabrum (strain C58 / ATCC 33970) (Agrobacterium tumefaciens (strain C58)).